Reading from the N-terminus, the 137-residue chain is Ribosome-binding factor A (137 aa).

The protein belongs to the RbfA family. Monomer. Binds 30S ribosomal subunits, but not 50S ribosomal subunits or 70S ribosomes.

It localises to the cytoplasm. One of several proteins that assist in the late maturation steps of the functional core of the 30S ribosomal subunit. Associates with free 30S ribosomal subunits (but not with 30S subunits that are part of 70S ribosomes or polysomes). Required for efficient processing of 16S rRNA. May interact with the 5'-terminal helix region of 16S rRNA. The sequence is that of Ribosome-binding factor A from Erwinia tasmaniensis (strain DSM 17950 / CFBP 7177 / CIP 109463 / NCPPB 4357 / Et1/99).